Reading from the N-terminus, the 485-residue chain is Kynureninase 1 (485 aa).

Pyridoxal 5'-phosphate is bound by residues Leu155, Thr156, 183 to 186 (FPSD), Asp267, His270, and Tyr292. An N6-(pyridoxal phosphate)lysine modification is found at Lys293. Pyridoxal 5'-phosphate-binding residues include Trp330 and Asn358.

This sequence belongs to the kynureninase family. As to quaternary structure, homodimer. The cofactor is pyridoxal 5'-phosphate.

The protein resides in the cytoplasm. It carries out the reaction L-kynurenine + H2O = anthranilate + L-alanine + H(+). The catalysed reaction is 3-hydroxy-L-kynurenine + H2O = 3-hydroxyanthranilate + L-alanine + H(+). Its pathway is amino-acid degradation; L-kynurenine degradation; L-alanine and anthranilate from L-kynurenine: step 1/1. The protein operates within cofactor biosynthesis; NAD(+) biosynthesis; quinolinate from L-kynurenine: step 2/3. In terms of biological role, catalyzes the cleavage of L-kynurenine (L-Kyn) and L-3-hydroxykynurenine (L-3OHKyn) into anthranilic acid (AA) and 3-hydroxyanthranilic acid (3-OHAA), respectively. This chain is Kynureninase 1 (kyn-1), found in Neurospora crassa (strain ATCC 24698 / 74-OR23-1A / CBS 708.71 / DSM 1257 / FGSC 987).